Consider the following 318-residue polypeptide: Ribose-phosphate pyrophosphokinase (318 aa).

ATP contacts are provided by residues 46–48 (DGE) and 105–106 (RQ). The Mg(2+) site is built by His139 and Asp178. Lys201 is an active-site residue. Residues Arg203, Asp227, and 231–235 (DTAGT) contribute to the D-ribose 5-phosphate site.

It belongs to the ribose-phosphate pyrophosphokinase family. Class I subfamily. Homohexamer. It depends on Mg(2+) as a cofactor.

It is found in the cytoplasm. It carries out the reaction D-ribose 5-phosphate + ATP = 5-phospho-alpha-D-ribose 1-diphosphate + AMP + H(+). The protein operates within metabolic intermediate biosynthesis; 5-phospho-alpha-D-ribose 1-diphosphate biosynthesis; 5-phospho-alpha-D-ribose 1-diphosphate from D-ribose 5-phosphate (route I): step 1/1. Functionally, involved in the biosynthesis of the central metabolite phospho-alpha-D-ribosyl-1-pyrophosphate (PRPP) via the transfer of pyrophosphoryl group from ATP to 1-hydroxyl of ribose-5-phosphate (Rib-5-P). The protein is Ribose-phosphate pyrophosphokinase of Helicobacter pylori (strain ATCC 700392 / 26695) (Campylobacter pylori).